The sequence spans 70 residues: DNA gyrase inhibitor YacG (70 aa).

The Zn(2+) site is built by Cys7, Cys10, Cys26, and Cys30.

Belongs to the DNA gyrase inhibitor YacG family. Interacts with GyrB. It depends on Zn(2+) as a cofactor.

Its function is as follows. Inhibits all the catalytic activities of DNA gyrase by preventing its interaction with DNA. Acts by binding directly to the C-terminal domain of GyrB, which probably disrupts DNA binding by the gyrase. This Shewanella woodyi (strain ATCC 51908 / MS32) protein is DNA gyrase inhibitor YacG.